A 324-amino-acid polypeptide reads, in one-letter code: Galactosylgalactosylxylosylprotein 3-beta-glucuronosyltransferase 2 (324 aa).

The Cytoplasmic portion of the chain corresponds to 1–2; the sequence is MK. Residues 3–23 traverse the membrane as a helical; Signal-anchor for type II membrane protein segment; the sequence is SALCSRFFILLPWILIVIIML. Residues 24 to 324 lie on the Lumenal side of the membrane; it reads DVDPRRPAPQ…YHLDTVNIEV (301 aa). The tract at residues 50–78 is disordered; it reads SRVPLRRSSPGRDAAEKRNESRPQLQPEP. N68 carries N-linked (GlcNAc...) asparagine glycosylation. UDP-alpha-D-glucuronate is bound by residues 88 to 90, D119, R156, R161, and 186 to 188; these read PTY and DDD. Position 188 (D188) interacts with Mn(2+). The interval 235 to 244 is interaction with galactose moiety of substrate glycoprotein; sequence WREDRPFAID. E274 (proton donor/acceptor) is an active-site residue. A glycan (N-linked (GlcNAc...) asparagine) is linked at N293. Residue 301 to 303 participates in UDP-alpha-D-glucuronate binding; sequence HTR.

Belongs to the glycosyltransferase 43 family. Homodimer. Requires Mn(2+) as cofactor. As to expression, expressed in brain, but not in liver and kidney.

It localises to the golgi apparatus membrane. It catalyses the reaction 3-O-(beta-D-galactosyl-(1-&gt;3)-beta-D-galactosyl-(1-&gt;4)-beta-D-xylosyl)-L-seryl-[protein] + UDP-alpha-D-glucuronate = 3-O-(beta-D-GlcA-(1-&gt;3)-beta-D-Gal-(1-&gt;3)-beta-D-Gal-(1-&gt;4)-beta-D-Xyl)-L-seryl-[protein] + UDP + H(+). It functions in the pathway protein modification; protein glycosylation. Involved in the biosynthesis of L2/HNK-1 carbohydrate epitope on both glycolipids and glycoproteins. This Mus musculus (Mouse) protein is Galactosylgalactosylxylosylprotein 3-beta-glucuronosyltransferase 2 (B3gat2).